A 307-amino-acid polypeptide reads, in one-letter code: Oxygen-dependent coproporphyrinogen-III oxidase (307 aa).

Ser94 lines the substrate pocket. A divalent metal cation-binding residues include His98 and His108. The Proton donor role is filled by His108. 110–112 (NVR) is a binding site for substrate. A divalent metal cation-binding residues include His147 and His177. The segment at 242–277 (YVEFNLVWDRGTLFGLQSGGRTESILMSMPPLAQWQ) is important for dimerization. Residue 260 to 262 (GGR) coordinates substrate.

This sequence belongs to the aerobic coproporphyrinogen-III oxidase family. In terms of assembly, homodimer. A divalent metal cation is required as a cofactor.

The protein resides in the cytoplasm. The catalysed reaction is coproporphyrinogen III + O2 + 2 H(+) = protoporphyrinogen IX + 2 CO2 + 2 H2O. It participates in porphyrin-containing compound metabolism; protoporphyrin-IX biosynthesis; protoporphyrinogen-IX from coproporphyrinogen-III (O2 route): step 1/1. Functionally, involved in the heme biosynthesis. Catalyzes the aerobic oxidative decarboxylation of propionate groups of rings A and B of coproporphyrinogen-III to yield the vinyl groups in protoporphyrinogen-IX. In Chromohalobacter salexigens (strain ATCC BAA-138 / DSM 3043 / CIP 106854 / NCIMB 13768 / 1H11), this protein is Oxygen-dependent coproporphyrinogen-III oxidase.